The primary structure comprises 420 residues: Pyridinium-3,5-bisthiocarboxylic acid mononucleotide nickel insertion protein (420 aa).

Belongs to the LarC family.

The catalysed reaction is Ni(II)-pyridinium-3,5-bisthiocarboxylate mononucleotide = pyridinium-3,5-bisthiocarboxylate mononucleotide + Ni(2+). Involved in the biosynthesis of a nickel-pincer cofactor ((SCS)Ni(II) pincer complex). Binds Ni(2+), and functions in nickel delivery to pyridinium-3,5-bisthiocarboxylic acid mononucleotide (P2TMN), to form the mature cofactor. Is required for the activation of the lactate racemase LarA. May also be involved in the activation of other nickel-pincer cofactor-dependent enzymes. In Lactiplantibacillus plantarum (strain ATCC BAA-793 / NCIMB 8826 / WCFS1) (Lactobacillus plantarum), this protein is Pyridinium-3,5-bisthiocarboxylic acid mononucleotide nickel insertion protein.